The following is a 136-amino-acid chain: Large ribosomal subunit protein uL22 (136 aa).

It belongs to the universal ribosomal protein uL22 family. Part of the 50S ribosomal subunit.

Functionally, this protein binds specifically to 23S rRNA; its binding is stimulated by other ribosomal proteins, e.g. L4, L17, and L20. It is important during the early stages of 50S assembly. It makes multiple contacts with different domains of the 23S rRNA in the assembled 50S subunit and ribosome. Its function is as follows. The globular domain of the protein is located near the polypeptide exit tunnel on the outside of the subunit, while an extended beta-hairpin is found that lines the wall of the exit tunnel in the center of the 70S ribosome. The polypeptide is Large ribosomal subunit protein uL22 (Bacteroides fragilis (strain ATCC 25285 / DSM 2151 / CCUG 4856 / JCM 11019 / LMG 10263 / NCTC 9343 / Onslow / VPI 2553 / EN-2)).